Consider the following 396-residue polypeptide: Elongation factor Tu (396 aa).

Residues 10-206 form the tr-type G domain; that stretch reads KPHCNIGTIG…AVDSYIPQPE (197 aa). The G1 stretch occupies residues 19-26; sequence GHVDHGKT. Residue 19–26 participates in GTP binding; it reads GHVDHGKT. Thr26 is a Mg(2+) binding site. Residues 60–64 form a G2 region; the sequence is GITIS. Positions 81–84 are G3; that stretch reads DCPG. GTP is bound by residues 81–85 and 136–139; these read DCPGH and NKVD. The interval 136–139 is G4; sequence NKVD. The tract at residues 174 to 176 is G5; it reads SAV.

The protein belongs to the TRAFAC class translation factor GTPase superfamily. Classic translation factor GTPase family. EF-Tu/EF-1A subfamily. In terms of assembly, monomer.

Its subcellular location is the cytoplasm. It catalyses the reaction GTP + H2O = GDP + phosphate + H(+). GTP hydrolase that promotes the GTP-dependent binding of aminoacyl-tRNA to the A-site of ribosomes during protein biosynthesis. This is Elongation factor Tu from Rhizorhabdus wittichii (strain DSM 6014 / CCUG 31198 / JCM 15750 / NBRC 105917 / EY 4224 / RW1) (Sphingomonas wittichii).